The primary structure comprises 285 residues: Diphthine methyl ester synthase (285 aa).

Residues leucine 9, aspartate 84, glycine 87, 112–113, leucine 163, valine 221, and histidine 246 each bind S-adenosyl-L-methionine; that span reads SI.

The protein belongs to the diphthine synthase family.

Its subcellular location is the cytoplasm. The catalysed reaction is 2-[(3S)-amino-3-carboxypropyl]-L-histidyl-[translation elongation factor 2] + 4 S-adenosyl-L-methionine = diphthine methyl ester-[translation elongation factor 2] + 4 S-adenosyl-L-homocysteine + 3 H(+). It functions in the pathway protein modification; peptidyl-diphthamide biosynthesis. Functionally, S-adenosyl-L-methionine-dependent methyltransferase that catalyzes four methylations of the modified target histidine residue in translation elongation factor 2 (EF-2), to form an intermediate called diphthine methyl ester. The four successive methylation reactions represent the second step of diphthamide biosynthesis. In Aspergillus fumigatus (strain ATCC MYA-4609 / CBS 101355 / FGSC A1100 / Af293) (Neosartorya fumigata), this protein is Diphthine methyl ester synthase (dph5).